We begin with the raw amino-acid sequence, 223 residues long: ATP phosphoribosyltransferase (223 aa).

It belongs to the ATP phosphoribosyltransferase family. Short subfamily. In terms of assembly, heteromultimer composed of HisG and HisZ subunits.

It is found in the cytoplasm. The catalysed reaction is 1-(5-phospho-beta-D-ribosyl)-ATP + diphosphate = 5-phospho-alpha-D-ribose 1-diphosphate + ATP. Its pathway is amino-acid biosynthesis; L-histidine biosynthesis; L-histidine from 5-phospho-alpha-D-ribose 1-diphosphate: step 1/9. Catalyzes the condensation of ATP and 5-phosphoribose 1-diphosphate to form N'-(5'-phosphoribosyl)-ATP (PR-ATP). Has a crucial role in the pathway because the rate of histidine biosynthesis seems to be controlled primarily by regulation of HisG enzymatic activity. This is ATP phosphoribosyltransferase from Desulfitobacterium hafniense (strain Y51).